Reading from the N-terminus, the 543-residue chain is Chaperonin GroEL 2 (543 aa).

Residues 29–32 (TLGP), 86–90 (DGTTT), G413, 479–481 (NAA), and D495 contribute to the ATP site.

It belongs to the chaperonin (HSP60) family. As to quaternary structure, forms a cylinder of 14 subunits composed of two heptameric rings stacked back-to-back. Interacts with the co-chaperonin GroES.

It localises to the cytoplasm. It catalyses the reaction ATP + H2O + a folded polypeptide = ADP + phosphate + an unfolded polypeptide.. In terms of biological role, together with its co-chaperonin GroES, plays an essential role in assisting protein folding. The GroEL-GroES system forms a nano-cage that allows encapsulation of the non-native substrate proteins and provides a physical environment optimized to promote and accelerate protein folding. The polypeptide is Chaperonin GroEL 2 (Synechococcus sp. (strain CC9311)).